A 766-amino-acid polypeptide reads, in one-letter code: MATYLEFIQQNEERDGVRFSWNVWPSSRLEATRMVVPLACLLTPLKERPDLPPVQYEPVLCSRPTCKAVLNPLCQVDYRAKLWACNFCFQRNQFPPAYGGISEVNQPAELMPQFSTIEYVIQRGAQSPLIFLYVVDTCLEEDDLQALKESLQMSLSLLPPDALVGLITFGRMVQVHELSCEGISKSYVFRGTKDLTAKQIQDMLGLTKPAMPMQQARPAQPQEHPFASSRFLQPVHKIDMNLTDLLGELQRDPWPVTQGKRPLRSTGVALSIAVGLLEGTFPNTGARIMLFTGGPPTQGPGMVVGDELKIPIRSWHDIEKDNARFMKKATKHYEMLANRTAANGHCIDIYACALDQTGLLEMKCCANLTGGYMVMGDSFNTSLFKQTFQRIFTKDFNGDFRMAFGATLDVKTSRELKIAGAIGPCVSLNVKGPCVSENELGVGGTSQWKICGLDPTSTLGIYFEVVNQHNTPIPQGGRGAIQFVTHYQHSSTQRRIRVTTIARNWADVQSQLRHIEAAFDQEAAAVLMARLGVFRAESEEGPDVLRWLDRQLIRLCQKFGQYNKEDPTSFRLSDSFSLYPQFMFHLRRSPFLQVFNNSPDSSYYRHHFARQDLTQSLIMIQPILYSYSFHGPPEPVLLDSSSILADRILLMDTFFQIVIYLGETIAQWRKAGYQDMPEYENFKHLLQAPLDDAQEILQARFPMPRYINTEHGGSQARFLLSKVNPSQTHNNLYAWGQETGAPILTDDVSLQVFMDHLKKLAVSSAC.

N-acetylalanine is present on Ala-2. The Zn(2+) site is built by Cys-61, Cys-66, Cys-85, and Cys-88. Position 564 is an N6-acetyllysine (Lys-564). One copy of the Gelsolin-like repeat lies at 633–719 (PEPVLLDSSS…EHGGSQARFL (87 aa)).

The protein belongs to the SEC23/SEC24 family. SEC23 subfamily. As to quaternary structure, COPII is composed of at least five proteins: the Sec23/24 complex, the Sec13/31 complex and Sar1. Interacts with SAR1A.

It localises to the cytoplasmic vesicle. It is found in the COPII-coated vesicle membrane. Its subcellular location is the endoplasmic reticulum membrane. The protein localises to the cytoplasm. The protein resides in the cytosol. Its function is as follows. Component of the coat protein complex II (COPII) which promotes the formation of transport vesicles from the endoplasmic reticulum (ER). The coat has two main functions, the physical deformation of the endoplasmic reticulum membrane into vesicles and the selection of cargo molecules for their transport to the Golgi complex. This chain is Protein transport protein Sec23B, found in Pongo abelii (Sumatran orangutan).